The sequence spans 736 residues: 1,4-alpha-glucan branching enzyme GlgB (736 aa).

The active-site Nucleophile is aspartate 415. Glutamate 470 acts as the Proton donor in catalysis.

It belongs to the glycosyl hydrolase 13 family. GlgB subfamily. As to quaternary structure, monomer.

It carries out the reaction Transfers a segment of a (1-&gt;4)-alpha-D-glucan chain to a primary hydroxy group in a similar glucan chain.. The protein operates within glycan biosynthesis; glycogen biosynthesis. Functionally, catalyzes the formation of the alpha-1,6-glucosidic linkages in glycogen by scission of a 1,4-alpha-linked oligosaccharide from growing alpha-1,4-glucan chains and the subsequent attachment of the oligosaccharide to the alpha-1,6 position. This Paraburkholderia xenovorans (strain LB400) protein is 1,4-alpha-glucan branching enzyme GlgB.